The chain runs to 64 residues: Large ribosomal subunit protein bL35 (64 aa).

The interval 1 to 28 (MPKMKTHSGAKKRFKLTGSGKLKRQQAN) is disordered.

It belongs to the bacterial ribosomal protein bL35 family.

The polypeptide is Large ribosomal subunit protein bL35 (Renibacterium salmoninarum (strain ATCC 33209 / DSM 20767 / JCM 11484 / NBRC 15589 / NCIMB 2235)).